Consider the following 435-residue polypeptide: Protein GOLM2 (435 aa).

Methionine 1 is modified (N-acetylmethionine). The Cytoplasmic portion of the chain corresponds to 1 to 14; it reads MVGFGANRRAGRLP. The chain crosses the membrane as a helical; Signal-anchor for type II membrane protein span at residues 15–35; that stretch reads SFVLVVLLVVIVVLAFNYWSI. The stretch at 35–194 forms a coiled coil; sequence ISSRHVLLQE…DQFLQEQKET (160 aa). At 36–435 the chain is on the lumenal side; it reads SSRHVLLQEE…YGKQRFSDVL (400 aa). Basic and acidic residues-rich tracts occupy residues 191–212 and 223–239; these read QKET…DHGA and DANK…PHGK. 2 disordered regions span residues 191 to 239 and 271 to 435; these read QKET…PHGK and PPVL…SDVL. The residue at position 232 (serine 232) is a Phosphoserine. 2 stretches are compositionally biased toward polar residues: residues 282-294 and 302-320; these read QTIS…QPLS and HLNQ…SNPL. A compositionally biased stretch (basic and acidic residues) spans 343–361; that stretch reads ATRDRANDFHKLKQSRFFD. Phosphoserine is present on serine 365. The segment covering 398–417 has biased composition (acidic residues); that stretch reads YNEEEDGDGGEEDVQDDEER. Residues 425–435 are compositionally biased toward basic and acidic residues; sequence DYGKQRFSDVL.

It belongs to the GOLM family.

The protein resides in the membrane. The sequence is that of Protein GOLM2 from Mus musculus (Mouse).